The sequence spans 156 residues: SsrA-binding protein (156 aa).

This sequence belongs to the SmpB family.

It is found in the cytoplasm. In terms of biological role, required for rescue of stalled ribosomes mediated by trans-translation. Binds to transfer-messenger RNA (tmRNA), required for stable association of tmRNA with ribosomes. tmRNA and SmpB together mimic tRNA shape, replacing the anticodon stem-loop with SmpB. tmRNA is encoded by the ssrA gene; the 2 termini fold to resemble tRNA(Ala) and it encodes a 'tag peptide', a short internal open reading frame. During trans-translation Ala-aminoacylated tmRNA acts like a tRNA, entering the A-site of stalled ribosomes, displacing the stalled mRNA. The ribosome then switches to translate the ORF on the tmRNA; the nascent peptide is terminated with the 'tag peptide' encoded by the tmRNA and targeted for degradation. The ribosome is freed to recommence translation, which seems to be the essential function of trans-translation. Required for trans-translation. Probably required for sporulation; deletion of the gene for tmRNA impairs sporulation via its effect on trans-translation, and as smpB is required for trans-translation under non-stress conditions, it is also probably required during sporulation. The protein is SsrA-binding protein of Bacillus subtilis (strain 168).